The primary structure comprises 337 residues: Pseudouridine-5'-phosphate glycosidase (337 aa).

The active-site Proton donor is Glu-26. Substrate contacts are provided by Lys-87 and Val-107. Mn(2+) is bound at residue Asp-139. 141-143 (SAD) contacts substrate. The active-site Nucleophile is the Lys-160. The span at 306–325 (SSGPQAGAGAPGAEPGPARR) shows a compositional bias: low complexity. The segment at 306–337 (SSGPQAGAGAPGAEPGPARRTSPARAPSGEGW) is disordered.

This sequence belongs to the pseudouridine-5'-phosphate glycosidase family. As to quaternary structure, homotrimer. Requires Mn(2+) as cofactor.

It carries out the reaction D-ribose 5-phosphate + uracil = psi-UMP + H2O. Its function is as follows. Catalyzes the reversible cleavage of pseudouridine 5'-phosphate (PsiMP) to ribose 5-phosphate and uracil. Functions biologically in the cleavage direction, as part of a pseudouridine degradation pathway. The chain is Pseudouridine-5'-phosphate glycosidase from Methylobacterium nodulans (strain LMG 21967 / CNCM I-2342 / ORS 2060).